A 109-amino-acid polypeptide reads, in one-letter code: UPF0122 protein CLH_1195 (109 aa).

Belongs to the UPF0122 family.

Might take part in the signal recognition particle (SRP) pathway. This is inferred from the conservation of its genetic proximity to ftsY/ffh. May be a regulatory protein. In Clostridium botulinum (strain Alaska E43 / Type E3), this protein is UPF0122 protein CLH_1195.